Consider the following 506-residue polypeptide: Cysteine protease 1 (506 aa).

Positions Met-1–Thr-21 are disordered. Catalysis depends on Cys-226, which acts as the Nucleophile. Active-site residues include Asp-399 and His-401.

This sequence belongs to the peptidase C54 family.

It is found in the cytoplasm. The protein localises to the nucleus. Its subcellular location is the preautophagosomal structure. It catalyses the reaction [protein]-C-terminal L-amino acid-glycyl-phosphatidylethanolamide + H2O = [protein]-C-terminal L-amino acid-glycine + a 1,2-diacyl-sn-glycero-3-phosphoethanolamine. Cysteine protease that plays a key role in cytoplasm to vacuole transport (Cvt) and autophagy by mediating both proteolytic activation and delipidation of ATG8. Required for selective autophagic degradation of the nucleus (nucleophagy) as well as for mitophagy which contributes to regulate mitochondrial quantity and quality by eliminating the mitochondria to a basal level to fulfill cellular energy requirements and preventing excess ROS production. The protease activity is required for proteolytic activation of ATG8: cleaves the C-terminal amino acid of ATG8 to reveal a C-terminal glycine. ATG8 ubiquitin-like activity requires the exposure of the glycine at the C-terminus for its conjugation to phosphatidylethanolamine (PE) and its insertion to membranes, which is necessary for autophagy. The ATG8-PE conjugate mediates tethering between adjacent membranes and stimulates membrane hemifusion, leading to expansion of the autophagosomal membrane during autophagy. In addition to the protease activity, also catalyzes deconjugation of PE-conjugated forms of ATG8 during macroautophagy: ATG8 delipidation is required to release the protein from membranes, which facilitates multiple events during macroautophagy, and especially for efficient autophagosome biogenesis, the assembly of ATG9-containing tubulovesicular clusters into phagophores/autophagosomes, and for the disassembly of PAS-associated ATG components. ATG8 delipidation by ATG4 also recycles ATG8-PE generated on inappropriate membranes to maintain a reservoir of unlipidated ATG8 that is required for autophagosome formation at the PAS. In Neurospora crassa (strain ATCC 24698 / 74-OR23-1A / CBS 708.71 / DSM 1257 / FGSC 987), this protein is Cysteine protease 1 (cpr-1).